Consider the following 400-residue polypeptide: S-adenosylmethionine synthase (400 aa).

137-142 (GEGSGD) serves as a coordination point for ATP.

The protein belongs to the AdoMet synthase 2 family. The cofactor is Mg(2+).

It carries out the reaction L-methionine + ATP + H2O = S-adenosyl-L-methionine + phosphate + diphosphate. The protein operates within amino-acid biosynthesis; S-adenosyl-L-methionine biosynthesis; S-adenosyl-L-methionine from L-methionine: step 1/1. Its function is as follows. Catalyzes the formation of S-adenosylmethionine from methionine and ATP. The sequence is that of S-adenosylmethionine synthase from Haloarcula marismortui (strain ATCC 43049 / DSM 3752 / JCM 8966 / VKM B-1809) (Halobacterium marismortui).